The following is a 122-amino-acid chain: Large ribosomal subunit protein uL14c (122 aa).

The protein belongs to the universal ribosomal protein uL14 family. In terms of assembly, part of the 50S ribosomal subunit.

It is found in the plastid. Its subcellular location is the chloroplast. Its function is as follows. Binds to 23S rRNA. The sequence is that of Large ribosomal subunit protein uL14c from Daucus carota (Wild carrot).